Here is a 787-residue protein sequence, read N- to C-terminus: MAEPESSTAAAGGSRLRNACGGVLCAFTLLLIGVLAFSIRLFSVIKYESVIHEFDPYFNFRVTQFLSKNGIYEFWNWFDDRTWYPLGRVIGGTVYPGLTLTAGTIWWLLNSLNIPLSVETVCVFTAPIFSANASWATYLLTKEAKGTGAGLMAAAILAMVPSYISRSVAGSYDNEAVAIFALIFTFYLYVKTLNTGSLFYATLNALSYFYMVCSWGGYTFIINLIPIHVLLCIVTGRYSSRLYIAYAPLVILGTLLAALVPVVGFNAVMTSEHFASFLVFIILHVVALVYYIKGLLTPRLFKVAMTLVITVGLAVCFAVIAILIALVASSPTKGWSGRSLSLLDPTYASKYIPIIASVSEHQPPTWPSYFMDINVLAFLIPAGIISCFLPLSDASSFVVLYLVTAVYFSGVMVRLMLVLAPAACILSGIALSEAFDVLTRSVKYQLSKLFDDSPAASGDSSAESSSASTVSTNSAKNETRPEKTETAPKEKPSKKNRKKEKEVAESVPVKPKKEKKLLVLPMEASVLGILLLIVLGGFYVVHCVWAAAEAYSAPSIVLTSRSRDGLHVFDDFREAYAWLSHNTDVDDKVASWWDYGYQTTAMANRTVIVDNNTWNNTHIATVGTAMSSPEKAAWEIFNSLDVKYVLVVFGGLVGYPSDDINKFLWMVRIGGGVFPHIKEPDYLRDGNYRVDAQGTPTMLNCLMYKLCYYRFVETDGKGFDRVRGYEIGKKHFKLTHFEEVFTTHHWMVRIYKLKPQKNRVRGKLKKLKSGSKASSTNAAGRKKNPWQ.

The Cytoplasmic portion of the chain corresponds to 1 to 18; that stretch reads MAEPESSTAAAGGSRLRN. A helical membrane pass occupies residues 19 to 39; sequence ACGGVLCAFTLLLIGVLAFSI. Residues 40-125 lie on the Lumenal side of the membrane; the sequence is RLFSVIKYES…LSVETVCVFT (86 aa). The DXD motif 1 signature appears at 53–55; that stretch reads EFD. Asp55 is a Mn(2+) binding site. A helical transmembrane segment spans residues 126-144; it reads APIFSANASWATYLLTKEA. Residues 145 to 146 are Cytoplasmic-facing; that stretch reads KG. The chain crosses the membrane as a helical span at residues 147-164; that stretch reads TGAGLMAAAILAMVPSYI. Over 165–175 the chain is Lumenal; sequence SRSVAGSYDNE. Mn(2+) is bound by residues Asp173 and Glu175. The DXD motif 2 motif lies at 173–175; it reads DNE. A helical membrane pass occupies residues 176–195; it reads AVAIFALIFTFYLYVKTLNT. The Cytoplasmic portion of the chain corresponds to 196-197; it reads GS. A helical transmembrane segment spans residues 198–212; the sequence is LFYATLNALSYFYMV. Residues 213 to 217 are Lumenal-facing; the sequence is CSWGG. Residues 218 to 234 form a helical membrane-spanning segment; sequence YTFIINLIPIHVLLCIV. Residues 235–239 are Cytoplasmic-facing; it reads TGRYS. A helical transmembrane segment spans residues 240-265; that stretch reads SRLYIAYAPLVILGTLLAALVPVVGF. The Lumenal segment spans residues 266–273; the sequence is NAVMTSEH. A helical membrane pass occupies residues 274-293; the sequence is FASFLVFIILHVVALVYYIK. Residues 294-306 are Cytoplasmic-facing; it reads GLLTPRLFKVAMT. Residues 307 to 327 form a helical membrane-spanning segment; the sequence is LVITVGLAVCFAVIAILIALV. The Lumenal segment spans residues 328 to 365; sequence ASSPTKGWSGRSLSLLDPTYASKYIPIIASVSEHQPPT. The short motif at 357–360 is the SVSE motif element; the sequence is SVSE. Residues 366–388 traverse the membrane as a helical segment; sequence WPSYFMDINVLAFLIPAGIISCF. Residues 389–394 lie on the Cytoplasmic side of the membrane; the sequence is LPLSDA. The chain crosses the membrane as a helical span at residues 395–411; the sequence is SSFVVLYLVTAVYFSGV. The Lumenal portion of the chain corresponds to 412–415; that stretch reads MVRL. Arg414 contacts dolichyl diphosphooligosaccharide. The chain crosses the membrane as a helical span at residues 416-437; it reads MLVLAPAACILSGIALSEAFDV. The Cytoplasmic segment spans residues 438 to 525; sequence LTRSVKYQLS…KLLVLPMEAS (88 aa). The span at 453–475 shows a compositional bias: low complexity; that stretch reads SPAASGDSSAESSSASTVSTNSA. A disordered region spans residues 453 to 507; that stretch reads SPAASGDSSAESSSASTVSTNSAKNETRPEKTETAPKEKPSKKNRKKEKEVAESV. Over residues 477–504 the composition is skewed to basic and acidic residues; sequence NETRPEKTETAPKEKPSKKNRKKEKEVA. The helical transmembrane segment at 526 to 546 threads the bilayer; the sequence is VLGILLLIVLGGFYVVHCVWA. Topologically, residues 547 to 787 are lumenal; the sequence is AAEAYSAPSI…AAGRKKNPWQ (241 aa). The interacts with target acceptor peptide in protein substrate stretch occupies residues 592–594; that stretch reads WWD. The short motif at 592 to 596 is the WWDYG motif element; sequence WWDYG. Tyr597 is a dolichyl diphosphooligosaccharide binding site. N-linked (GlcNAc...) asparagine glycans are attached at residues Asn604 and Asn611. An N-linked (GlcNAc...) (high mannose) asparagine glycan is attached at Asn615. A DK motif motif is present at residues 659–666; that stretch reads DINKFLWM. Residues 759–769 are compositionally biased toward basic residues; the sequence is RVRGKLKKLKS. The interval 759-787 is disordered; that stretch reads RVRGKLKKLKSGSKASSTNAAGRKKNPWQ.

It belongs to the STT3 family. In terms of assembly, component of the oligosaccharyltransferase (OST) complex. Mg(2+) serves as cofactor. Requires Mn(2+) as cofactor.

The protein localises to the endoplasmic reticulum membrane. It carries out the reaction a di-trans,poly-cis-dolichyl diphosphooligosaccharide + L-asparaginyl-[protein] = N(4)-(oligosaccharide-(1-&gt;4)-N-acetyl-beta-D-glucosaminyl-(1-&gt;4)-N-acetyl-beta-D-glucosaminyl)-L-asparaginyl-[protein] + a di-trans,poly-cis-dolichyl diphosphate + H(+). It participates in protein modification; protein glycosylation. Functionally, catalytic subunit of the oligosaccharyl transferase (OST) complex that catalyzes the initial transfer of a defined glycan (Glc(3)Man(9)GlcNAc(2) in eukaryotes) from the lipid carrier dolichol-pyrophosphate to an asparagine residue within an Asn-X-Ser/Thr consensus motif in nascent polypeptide chains, the first step in protein N-glycosylation. N-glycosylation occurs cotranslationally and the complex associates with the Sec61 complex at the channel-forming translocon complex that mediates protein translocation across the endoplasmic reticulum (ER). All subunits are required for a maximal enzyme activity. This subunit contains the active site and the acceptor peptide and donor lipid-linked oligosaccharide (LLO) binding pockets. In Oryza sativa subsp. japonica (Rice), this protein is Dolichyl-diphosphooligosaccharide--protein glycosyltransferase subunit STT3A (STT3A).